A 67-amino-acid chain; its full sequence is Beta-defensin 123 (67 aa).

The signal sequence occupies residues 1–20 (MKLLLLTLTVLLLLSQLTPG). Cystine bridges form between Cys-25–Cys-52, Cys-32–Cys-46, and Cys-36–Cys-53.

Belongs to the beta-defensin family.

Its subcellular location is the secreted. Has antibacterial activity. The polypeptide is Beta-defensin 123 (DEFB123) (Gorilla gorilla gorilla (Western lowland gorilla)).